The primary structure comprises 534 residues: Membrane-bound lytic murein transglycosylase F (534 aa).

The N-terminal stretch at 1-24 (MQISQFNRLKRSALLFASVLLLSA) is a signal peptide. The interval 25 to 285 (CQIESEPKSE…TLEEKYIGHI (261 aa)) is non-LT domain. The interval 287-534 (AFDYVDTRAF…AEQTPVPKAE (248 aa)) is LT domain. Residue glutamate 330 is part of the active site. The tract at residues 507-534 (VSGAVEVTPPPEENAPQEAEQTPVPKAE) is disordered. Over residues 520–534 (NAPQEAEQTPVPKAE) the composition is skewed to low complexity.

In the N-terminal section; belongs to the bacterial solute-binding protein 3 family. It in the C-terminal section; belongs to the transglycosylase Slt family.

The protein localises to the cell outer membrane. The enzyme catalyses Exolytic cleavage of the (1-&gt;4)-beta-glycosidic linkage between N-acetylmuramic acid (MurNAc) and N-acetylglucosamine (GlcNAc) residues in peptidoglycan, from either the reducing or the non-reducing ends of the peptidoglycan chains, with concomitant formation of a 1,6-anhydrobond in the MurNAc residue.. Murein-degrading enzyme that degrades murein glycan strands and insoluble, high-molecular weight murein sacculi, with the concomitant formation of a 1,6-anhydromuramoyl product. Lytic transglycosylases (LTs) play an integral role in the metabolism of the peptidoglycan (PG) sacculus. Their lytic action creates space within the PG sacculus to allow for its expansion as well as for the insertion of various structures such as secretion systems and flagella. This chain is Membrane-bound lytic murein transglycosylase F, found in Vibrio campbellii (strain ATCC BAA-1116).